A 1809-amino-acid polypeptide reads, in one-letter code: Proprotein convertase subtilisin/kexin type 5 (1809 aa).

Residues 1–34 (MDWGWGSRCCRPGRRDLLCVLALLAGCLLPVCRT) form the signal peptide. Positions 35–116 (RVYTNHWAVK…QQVVKKRTKR (82 aa)) are excised as a propeptide. The Extracellular portion of the chain corresponds to 117–1700 (DYDLSRAQST…DTVFHEHTKT (1584 aa)). Positions 136–455 (MWYMHCSDNT…FGLMDAEAMV (320 aa)) constitute a Peptidase S8 domain. Active-site charge relay system residues include Asp-173 and His-214. 2 N-linked (GlcNAc...) asparagine glycosylation sites follow: Asn-227 and Asn-383. Ser-388 functions as the Charge relay system in the catalytic mechanism. Residues 463 to 603 (TVPQQHVCVE…SLVLYGTSVQ (141 aa)) enclose the P/Homo B domain. The Cell attachment site motif lies at 521-523 (RGD). FU repeat units follow at residues 632–682 (EDYA…GHFH), 685–732 (KKRC…GSYQ), 736–779 (KNIC…GQFF), 781–826 (GHDC…SYYL), 834–881 (YKSC…GEYI), 884–929 (QGHC…WKFE), 931–964 (KKQC…QDSE), 965–1010 (YGEC…KTFG), 1012–1054 (KWEC…GFYG), 1058–1099 (LGEC…PTWP), 1137–1179 (TRQY…GTWL), 1183–1230 (SSSC…GFYA), 1232–1276 (DGVC…KHVA), 1278–1321 (EGVC…NFYP), 1323–1369 (MRQC…GTYK), 1373–1418 (NDEC…IEYW), 1422–1467 (SHRC…GYHT), 1471–1516 (SHQC…GYYG), 1520–1567 (SGRC…HYYA), 1571–1616 (AQTC…GEYR), and 1622–1669 (NFNC…SHPH). The CRM (Cys-rich motif) stretch occupies residues 638–1685 (CDPECSEVGC…DCQSSTDECI (1048 aa)). N-linked (GlcNAc...) asparagine glycosylation is present at Asn-667. Asn-754, Asn-804, and Asn-854 each carry an N-linked (GlcNAc...) asparagine glycan. N-linked (GlcNAc...) asparagine glycosylation is found at Asn-1642 and Asn-1664. Residues 1701-1721 (ALLVTSGAMLLLLLGAAVVVW) traverse the membrane as a helical segment. Residues 1722–1809 (RKSRSQPVAK…EYDDESYSYQ (88 aa)) lie on the Cytoplasmic side of the membrane. AC stretches follow at residues 1757 to 1776 (VIEY…IVYM) and 1788 to 1809 (YGLL…YSYQ).

The protein belongs to the peptidase S8 family. Expressed in the intestine, brain, adrenal gland, anterior pituitary, thyroid, ovaries, testis and lung. Highest levels are found in the gut, duodenum, jejunum and ileum. Expression is higher in female than in male reproductive organs.

Its subcellular location is the secreted. It localises to the endomembrane system. Functionally, serine endoprotease that processes various proproteins by cleavage at paired basic amino acids, recognizing the RXXX[KR]R consensus motif. Likely functions in the constitutive and regulated secretory pathways. Plays an essential role in pregnancy establishment by proteolytic activation of a number of important factors such as BMP2, CALD1 and alpha-integrins. May be responsible for the maturation of gastrointestinal peptides. May be involved in the cellular proliferation of adrenal cortex via the activation of growth factors. The protein is Proprotein convertase subtilisin/kexin type 5 (Pcsk5) of Rattus norvegicus (Rat).